A 190-amino-acid chain; its full sequence is dTTP/UTP pyrophosphatase (190 aa).

Asp69 (proton acceptor) is an active-site residue.

Belongs to the Maf family. YhdE subfamily. Requires a divalent metal cation as cofactor.

It localises to the cytoplasm. It carries out the reaction dTTP + H2O = dTMP + diphosphate + H(+). It catalyses the reaction UTP + H2O = UMP + diphosphate + H(+). Nucleoside triphosphate pyrophosphatase that hydrolyzes dTTP and UTP. May have a dual role in cell division arrest and in preventing the incorporation of modified nucleotides into cellular nucleic acids. This Sphingopyxis alaskensis (strain DSM 13593 / LMG 18877 / RB2256) (Sphingomonas alaskensis) protein is dTTP/UTP pyrophosphatase.